A 402-amino-acid chain; its full sequence is Acetylornithine aminotransferase (402 aa).

Pyridoxal 5'-phosphate is bound by residues 117–118 (GA) and Phe-143. Arg-146 is a binding site for N(2)-acetyl-L-ornithine. 231–234 (DEVQ) serves as a coordination point for pyridoxal 5'-phosphate. N6-(pyridoxal phosphate)lysine is present on Lys-260. Residue Thr-288 coordinates N(2)-acetyl-L-ornithine. Residue Thr-289 participates in pyridoxal 5'-phosphate binding.

It belongs to the class-III pyridoxal-phosphate-dependent aminotransferase family. ArgD subfamily. In terms of assembly, homodimer. Requires pyridoxal 5'-phosphate as cofactor.

It localises to the cytoplasm. It catalyses the reaction N(2)-acetyl-L-ornithine + 2-oxoglutarate = N-acetyl-L-glutamate 5-semialdehyde + L-glutamate. It participates in amino-acid biosynthesis; L-arginine biosynthesis; N(2)-acetyl-L-ornithine from L-glutamate: step 4/4. The chain is Acetylornithine aminotransferase from Corynebacterium efficiens (strain DSM 44549 / YS-314 / AJ 12310 / JCM 11189 / NBRC 100395).